The sequence spans 90 residues: Co-chaperonin GroES (90 aa).

It belongs to the GroES chaperonin family. As to quaternary structure, heptamer of 7 subunits arranged in a ring. Interacts with the chaperonin GroEL.

The protein localises to the cytoplasm. Functionally, together with the chaperonin GroEL, plays an essential role in assisting protein folding. The GroEL-GroES system forms a nano-cage that allows encapsulation of the non-native substrate proteins and provides a physical environment optimized to promote and accelerate protein folding. GroES binds to the apical surface of the GroEL ring, thereby capping the opening of the GroEL channel. The sequence is that of Co-chaperonin GroES from Thermosipho melanesiensis (strain DSM 12029 / CIP 104789 / BI429).